The sequence spans 394 residues: Acetate kinase (394 aa).

Asn-7 provides a ligand contact to Mg(2+). An ATP-binding site is contributed by Lys-14. Substrate is bound at residue Arg-88. Asp-145 acts as the Proton donor/acceptor in catalysis. ATP contacts are provided by residues 205 to 209 (HLGNG), 279 to 281 (DFR), and 327 to 331 (GIGEN). Mg(2+) is bound at residue Glu-379.

It belongs to the acetokinase family. In terms of assembly, homodimer. The cofactor is Mg(2+). It depends on Mn(2+) as a cofactor.

The protein localises to the cytoplasm. The catalysed reaction is acetate + ATP = acetyl phosphate + ADP. Its pathway is metabolic intermediate biosynthesis; acetyl-CoA biosynthesis; acetyl-CoA from acetate: step 1/2. Functionally, catalyzes the formation of acetyl phosphate from acetate and ATP. Can also catalyze the reverse reaction. The polypeptide is Acetate kinase (Campylobacter lari (strain RM2100 / D67 / ATCC BAA-1060)).